The following is a 507-amino-acid chain: Cytochrome P450 monooxygenase tpeC (507 aa).

Residues 24-44 (TLAIALIVGFVILKAIYNVFF) traverse the membrane as a helical segment. C449 is a heme binding site.

This sequence belongs to the cytochrome P450 family. Heme serves as cofactor.

It localises to the membrane. Its pathway is secondary metabolite biosynthesis. In terms of biological role, cytochrome P450 monooxygenase; part of the gene cluster that mediates the biosynthesis of polyesters containing 2,4-dihydroxy-6-(2-hydroxypropyl)benzoate and 3-hydroxybutyrate moieties, such as talapolyester G, 15G256beta and 15G256beta-2; as well as to oxidized derivatives such as 15G256alpha. The biosynthesis of the polyesters probably starts with the formation of the diketide 3-hydroxybutyryl-S-ACP catalyzed by the partially reducing polyketide synthase tpeA. The acceptance of 3-hydroxybutyryl by the non-reducing polyketide synthase tpeB would initiate further elongation and cyclization, catalyzed by KS and PT, respectively, to form 2,4-dihydroxy-6-(2-hydroxyn-propyl)benzoyl-S-ACP intermediate. The TE domain could catalyze lactonization at this step to yield 6-hydroxymellein as a derailment product. The polyesterification process maybe occurs when additional molecules of 3-hydroxybutyryl are transferred to tpeB. Following the first esterification step, an intramolecular cyclization catalyzed by the TE domain of tpeB would give talarodioxadione 1, whereas the ethyl esterification of talapolyester G perhaps happens spontaneously. Further oxidation by the cytochrome P450 monooxygenase tpeC then leads to the formation of oxidized derivatives. The sequence is that of Cytochrome P450 monooxygenase tpeC from Talaromyces stipitatus (strain ATCC 10500 / CBS 375.48 / QM 6759 / NRRL 1006) (Penicillium stipitatum).